The primary structure comprises 378 residues: Pyrimidine monooxygenase RutA (378 aa).

Residues 65-66, N131, E140, 156-157, and S206 contribute to the FMN site; these read IK and RY.

It belongs to the NtaA/SnaA/DszA monooxygenase family. RutA subfamily.

The enzyme catalyses uracil + FMNH2 + NADH + O2 = (Z)-3-ureidoacrylate + FMN + NAD(+) + H2O + H(+). The catalysed reaction is thymine + FMNH2 + NADH + O2 = (Z)-2-methylureidoacrylate + FMN + NAD(+) + H2O + H(+). Its function is as follows. Catalyzes the pyrimidine ring opening between N-3 and C-4 by an unusual flavin hydroperoxide-catalyzed mechanism, adding oxygen atoms in the process to yield ureidoacrylate peracid, that immediately reacts with FMN forming ureidoacrylate and FMN-N(5)-oxide. The FMN-N(5)-oxide reacts spontaneously with NADH to produce FMN. Requires the flavin reductase RutF to regenerate FMN in vivo. The chain is Pyrimidine monooxygenase RutA from Cronobacter turicensis (strain DSM 18703 / CCUG 55852 / LMG 23827 / z3032).